Here is a 95-residue protein sequence, read N- to C-terminus: Large ribosomal subunit protein bL27 (95 aa).

The propeptide occupies 1–6 (MKLQLF). The tract at residues 1-25 (MKLQLFAHKKGVGSSRNGRDSESKR) is disordered.

This sequence belongs to the bacterial ribosomal protein bL27 family. The N-terminus is cleaved by ribosomal processing cysteine protease Prp.

The protein is Large ribosomal subunit protein bL27 of Thermoanaerobacter pseudethanolicus (strain ATCC 33223 / 39E) (Clostridium thermohydrosulfuricum).